The chain runs to 415 residues: Casein kinase I isoform delta (415 aa).

In terms of domain architecture, Protein kinase spans 9–277; sequence YRLGRKIGSG…YLRQLFRNLF (269 aa). Residues 15–23 and lysine 38 contribute to the ATP site; that span reads IGSGSFGDI. The active-site Proton acceptor is the aspartate 128. Residues 278 to 364 form a centrosomal localization signal (CLS) region; that stretch reads HRQGFSYDYV…TSPRPVSGME (87 aa). The segment covering 301-315 has biased composition (basic and acidic residues); sequence ADDAERERRDREERL. A disordered region spans residues 301 to 415; sequence ADDAERERRD…SSGLQSVVHR (115 aa). Residues 317–342 form an autoinhibitory region; sequence HSRNPATRGLPSTASGRLRGTQEVAP. 2 positions are modified to phosphoserine: serine 328 and serine 331. Over residues 347–358 the composition is skewed to polar residues; that stretch reads TPTSHTANTSPR. A Phosphoserine modification is found at serine 370. At arginine 375 the chain carries Omega-N-methylarginine. Polar residues predominate over residues 380 to 400; that stretch reads NISSSDLTGRQDTSRMSTSQI. A phosphoserine mark is found at serine 382, serine 383, serine 384, serine 407, and serine 411.

This sequence belongs to the protein kinase superfamily. CK1 Ser/Thr protein kinase family. Casein kinase I subfamily. In terms of assembly, monomer. Component of the circadian core oscillator, which includes the CRY proteins, CLOCK, or NPAS2, ARTNL/BMAL1 or ARTNL2/BMAL2, CSNK1D and/or CSNK1E, TIMELESS and the PER proteins. Interacts with DNMT1 and MAP1A. Interacts directly with PER1 and PER2 which may lead to their degradation. Interacts with MAPT/TAU, SNAPIN, DBNDD2, AIB1/NCOA3 and ESR1. Interacts with AKAP9/AKAP450; this interaction promotes centrosomal subcellular location. Binds to tubulins in mitotic cells upon DNA damage. Interacts with GJA1. Interacts with DDX3X; this interaction enhances CSNK1D kinase activity in vitro, but it is unclear whether this interaction is physiologically relevant. Interacts with FAM83A, FAM83B, FAM83E and FAM83H (via DUF1669). In terms of processing, autophosphorylated on serine and threonine residues; this autophosphorylation represses activity. Reactivated by phosphatase-mediated dephosphorylation. May be dephosphorylated by PP1.

Its subcellular location is the cytoplasm. It is found in the nucleus. The protein localises to the cytoskeleton. The protein resides in the microtubule organizing center. It localises to the centrosome. Its subcellular location is the perinuclear region. It is found in the cell membrane. The protein localises to the spindle. The protein resides in the golgi apparatus. It catalyses the reaction L-seryl-[protein] + ATP = O-phospho-L-seryl-[protein] + ADP + H(+). The catalysed reaction is L-threonyl-[protein] + ATP = O-phospho-L-threonyl-[protein] + ADP + H(+). The enzyme catalyses L-seryl-[tau protein] + ATP = O-phospho-L-seryl-[tau protein] + ADP + H(+). It carries out the reaction L-threonyl-[tau protein] + ATP = O-phospho-L-threonyl-[tau protein] + ADP + H(+). Drug-mediated inhibition leads to a delay of the oscillations with the magnitude of this effect dependent upon the timing of drug administration. Inhibited by phosphorylation. Exhibits substrate-dependent heparin activation. Essential serine/threonine-protein kinase that regulates diverse cellular growth and survival processes including Wnt signaling, DNA repair and circadian rhythms. It can phosphorylate a large number of proteins. Casein kinases are operationally defined by their preferential utilization of acidic proteins such as caseins as substrates. Phosphorylates connexin-43/GJA1, MAP1A, SNAPIN, MAPT/TAU, TOP2A, DCK, HIF1A, EIF6, p53/TP53, DVL2, DVL3, ESR1, AIB1/NCOA3, DNMT1, PKD2, YAP1, PER1 and PER2. Central component of the circadian clock. In balance with PP1, determines the circadian period length through the regulation of the speed and rhythmicity of PER1 and PER2 phosphorylation. Controls PER1 and PER2 nuclear transport and degradation. YAP1 phosphorylation promotes its SCF(beta-TRCP) E3 ubiquitin ligase-mediated ubiquitination and subsequent degradation. DNMT1 phosphorylation reduces its DNA-binding activity. Phosphorylation of ESR1 and AIB1/NCOA3 stimulates their activity and coactivation. Phosphorylation of DVL2 and DVL3 regulates WNT3A signaling pathway that controls neurite outgrowth. Phosphorylates NEDD9/HEF1. EIF6 phosphorylation promotes its nuclear export. Triggers down-regulation of dopamine receptors in the forebrain. Activates DCK in vitro by phosphorylation. TOP2A phosphorylation favors DNA cleavable complex formation. May regulate the formation of the mitotic spindle apparatus in extravillous trophoblast. Modulates connexin-43/GJA1 gap junction assembly by phosphorylation. Probably involved in lymphocyte physiology. Regulates fast synaptic transmission mediated by glutamate. This Bos taurus (Bovine) protein is Casein kinase I isoform delta (CSNK1D).